A 212-amino-acid polypeptide reads, in one-letter code: MQNRPIIIGVTGGSGGGKTSVSRAILSHFPDEKISMIEHDSYYKDQSHLTFEERVKTNYDHPFAFDTDLMIEQIKELLAGRPVDIPTYDYTEHTRSSKTYRQEPQDVFIVEGILVLEDKRLRDLMDIKIFVDTDDDVRIIRRIKRDMEERGRSLDSVINQYLGVVKPMYHQFIESTKRYADIVIPEGVSNTVAIDLLTTKIAKILEEARNSK.

ATP is bound at residue 12–19 (GGSGGGKT).

Belongs to the uridine kinase family.

The protein resides in the cytoplasm. The enzyme catalyses uridine + ATP = UMP + ADP + H(+). The catalysed reaction is cytidine + ATP = CMP + ADP + H(+). It functions in the pathway pyrimidine metabolism; CTP biosynthesis via salvage pathway; CTP from cytidine: step 1/3. It participates in pyrimidine metabolism; UMP biosynthesis via salvage pathway; UMP from uridine: step 1/1. In Streptococcus pneumoniae serotype 2 (strain D39 / NCTC 7466), this protein is Uridine kinase.